The following is a 505-amino-acid chain: ATP synthase subunit alpha (505 aa).

169-176 is a binding site for ATP; sequence GDRQTGKT.

This sequence belongs to the ATPase alpha/beta chains family. In terms of assembly, F-type ATPases have 2 components, CF(1) - the catalytic core - and CF(0) - the membrane proton channel. CF(1) has five subunits: alpha(3), beta(3), gamma(1), delta(1), epsilon(1). CF(0) has three main subunits: a(1), b(2) and c(9-12). The alpha and beta chains form an alternating ring which encloses part of the gamma chain. CF(1) is attached to CF(0) by a central stalk formed by the gamma and epsilon chains, while a peripheral stalk is formed by the delta and b chains.

The protein localises to the cell membrane. The enzyme catalyses ATP + H2O + 4 H(+)(in) = ADP + phosphate + 5 H(+)(out). In terms of biological role, produces ATP from ADP in the presence of a proton gradient across the membrane. The alpha chain is a regulatory subunit. This chain is ATP synthase subunit alpha, found in Clostridium acetobutylicum (strain ATCC 824 / DSM 792 / JCM 1419 / IAM 19013 / LMG 5710 / NBRC 13948 / NRRL B-527 / VKM B-1787 / 2291 / W).